The primary structure comprises 542 residues: Protein MGF 505-11L (542 aa).

Belongs to the asfivirus MGF 505 family.

In terms of biological role, plays a role in virus cell tropism, and may be required for efficient virus replication in macrophages. This chain is Protein MGF 505-11L, found in African swine fever virus (isolate Pig/Kenya/KEN-50/1950) (ASFV).